We begin with the raw amino-acid sequence, 833 residues long: Neuronal tyrosine-phosphorylated phosphoinositide-3-kinase adapter 1 (833 aa).

5 disordered regions span residues 1–45 (MNLL…PGVR), 64–191 (PASQ…LQRL), 219–423 (VFRG…RELP), 645–674 (EEDG…PSGI), and 736–765 (HTPR…QPAR). A compositionally biased stretch (basic and acidic residues) spans 8 to 25 (TKLEWRQHKEEEAKRSSS). Positions 76–181 (STMAPRSLSC…DESCAPAPSP (106 aa)) are involved in CYFIP1- and NCKAP1-binding. Over residues 111–120 (PPAKPRRHPS) the composition is skewed to basic residues. Polar residues predominate over residues 162–171 (SPNTQLSVSF). The span at 220–239 (FRGGGRSGGGLAGPPLGSGG) shows a compositional bias: gly residues. Positions 248–257 (SDSEDSEAIY) are enriched in acidic residues. The span at 275 to 285 (GPPPLTAPSPP) shows a compositional bias: pro residues.

The protein belongs to the NYAP family. As to quaternary structure, interacts with ACOT9, ARHGAP26 and PIK3R2. Interacts with components of the WAVE1 complex, CYFIP1 and NCKAP1; this interaction mediates PI3K-WAVE1 association and actin cytoskeleton remodeling. In terms of processing, phosphorylated on tyrosine residues by FYN upon stimulation with CNTN5. Phosphorylation begins at 14 dpc, reaches a peak during perinatal days in brain, then gradually decreases. In terms of tissue distribution, expressed predominantly in brain where it is present in the neurons, but not in astrocytes or oligodendrites.

Functionally, activates PI3K and concomitantly recruits the WAVE1 complex to the close vicinity of PI3K and regulates neuronal morphogenesis. The sequence is that of Neuronal tyrosine-phosphorylated phosphoinositide-3-kinase adapter 1 (Nyap1) from Mus musculus (Mouse).